The primary structure comprises 741 residues: MKESFYIEGMTCTACSSGIERSLGRKSFVKKIEVSLLNKSANIEFNENETNLDEIFKLIEKLGYSPKKTLAEEKKEFFSPNVKLALAVIFTLFVVYLSMGAMLSPSLLPESLLTINNHSNFLNACLQLIGTLIVMHLGRDFYIQGFKALWHRQPNMSSLIAIGTSAALISSLWQLYFVYTSQWSYGHYYFESVCVILMFVMVGKRIENVSKDKALDAMQALMKNAPKTALKMHNNQQIEVLVDSIVVGDILKVLPGSAIAVDGEIIEGEGELDESMLSGEALPVYKKVGDKVFSGTFNSHTSFLMKATQDNKNSTLSQIVEMIHNAQSSKAEISRLADKVSSVFVPSVIAIAILAFVVWLIIAPKPDFWWNFGIALEVFVSVLVISCPCALGLATPMSILVANQKASSLGLFFKDAKSLEKARLVNTIVFDKTGTLTNGKPVVKSVHSNIELLELLSLAGSIEKSSEHVIAKGIVEYAKEHNAPLKEMSEVKVKTGFGISAKTDYQGAKEVIKVGNSEFFNPINALEIQENGILVFVGRVISEKEDELLGAFVLEDLPKKGVKEHIAQIKKLGINTFLLSGDNRENVKKCALELGIDGYISNAKPQDKLNKIKELKEKGQIVMMVGDGLNDAPSLAMSDVAVVMAKGSDVSVQAADIVSFNNDIKSVYSAIKLSQATIKNIKENLFWAFCYNSVFIPLACGVLYKANIMLSPAIAGLAMSLSSVSVVLNSQRLRNFKIKDH.

The HMA domain occupies 1-67; it reads MKESFYIEGM…LIEKLGYSPK (67 aa). Topologically, residues 1–83 are cytoplasmic; that stretch reads MKESFYIEGM…KKEFFSPNVK (83 aa). 2 residues coordinate Cu cation: C12 and C15. Residues 84–104 traverse the membrane as a helical segment; sequence LALAVIFTLFVVYLSMGAMLS. At 105–124 the chain is on the extracellular side; that stretch reads PSLLPESLLTINNHSNFLNA. A helical membrane pass occupies residues 125–144; sequence CLQLIGTLIVMHLGRDFYIQ. At 145–151 the chain is on the cytoplasmic side; the sequence is GFKALWH. Residues 152–172 form a helical membrane-spanning segment; it reads RQPNMSSLIAIGTSAALISSL. The Extracellular portion of the chain corresponds to 173 to 190; it reads WQLYFVYTSQWSYGHYYF. The chain crosses the membrane as a helical span at residues 191 to 211; sequence ESVCVILMFVMVGKRIENVSK. Residues 212–339 are Cytoplasmic-facing; it reads DKALDAMQAL…KAEISRLADK (128 aa). Residues 340–362 form a helical membrane-spanning segment; that stretch reads VSSVFVPSVIAIAILAFVVWLII. Residues 363 to 375 lie on the Extracellular side of the membrane; sequence APKPDFWWNFGIA. Residues 376-393 form a helical membrane-spanning segment; that stretch reads LEVFVSVLVISCPCALGL. At 394–681 the chain is on the cytoplasmic side; sequence ATPMSILVAN…KLSQATIKNI (288 aa). D431 functions as the 4-aspartylphosphate intermediate in the catalytic mechanism. Residues D627 and D631 each contribute to the Mg(2+) site. Residues 682–701 traverse the membrane as a helical segment; it reads KENLFWAFCYNSVFIPLACG. Over 702-712 the chain is Extracellular; sequence VLYKANIMLSP. Residues 713-731 form a helical membrane-spanning segment; that stretch reads AIAGLAMSLSSVSVVLNSQ. Over 732–741 the chain is Cytoplasmic; that stretch reads RLRNFKIKDH.

It belongs to the cation transport ATPase (P-type) (TC 3.A.3) family. Type IB subfamily.

It localises to the cell membrane. The enzyme catalyses Cu(2+)(in) + ATP + H2O = Cu(2+)(out) + ADP + phosphate + H(+). In terms of biological role, probably involved in copper export. This is Copper-transporting ATPase (copA) from Helicobacter pylori (Campylobacter pylori).